The primary structure comprises 681 residues: DNA ligase (681 aa).

NAD(+)-binding positions include 33–37, 83–84, and E113; these read DGQFD and SL. K115 acts as the N6-AMP-lysine intermediate in catalysis. NAD(+)-binding residues include R136, E176, K292, and K316. 4 residues coordinate Zn(2+): C410, C413, C429, and C435. Residues 599–681 enclose the BRCT domain; it reads SIPRNLEGLS…RALLADGPPA (83 aa).

The protein belongs to the NAD-dependent DNA ligase family. LigA subfamily. Mg(2+) is required as a cofactor. The cofactor is Mn(2+).

It catalyses the reaction NAD(+) + (deoxyribonucleotide)n-3'-hydroxyl + 5'-phospho-(deoxyribonucleotide)m = (deoxyribonucleotide)n+m + AMP + beta-nicotinamide D-nucleotide.. In terms of biological role, DNA ligase that catalyzes the formation of phosphodiester linkages between 5'-phosphoryl and 3'-hydroxyl groups in double-stranded DNA using NAD as a coenzyme and as the energy source for the reaction. It is essential for DNA replication and repair of damaged DNA. The sequence is that of DNA ligase from Mycobacteroides abscessus (strain ATCC 19977 / DSM 44196 / CCUG 20993 / CIP 104536 / JCM 13569 / NCTC 13031 / TMC 1543 / L948) (Mycobacterium abscessus).